A 598-amino-acid polypeptide reads, in one-letter code: Urease subunit alpha (598 aa).

Residues His-141, His-143, and Lys-223 each coordinate Ni(2+). Lys-223 carries the post-translational modification N6-carboxylysine. His-225 provides a ligand contact to substrate. Ni(2+)-binding residues include His-252 and His-278. His-326 serves as the catalytic Proton donor. Residue Asp-366 participates in Ni(2+) binding.

This sequence belongs to the metallo-dependent hydrolases superfamily. Urease alpha subunit family. Heterotrimer of UreA (gamma), UreB (beta) and UreC (alpha) subunits. Three heterotrimers associate to form the active enzyme. Requires Ni cation as cofactor. In terms of processing, carboxylation allows a single lysine to coordinate two nickel ions.

It localises to the cytoplasm. It catalyses the reaction urea + 2 H2O + H(+) = hydrogencarbonate + 2 NH4(+). Its pathway is nitrogen metabolism; urea degradation; CO(2) and NH(3) from urea (urease route): step 1/1. The protein is Urease subunit alpha of Ureaplasma parvum serovar 3 (strain ATCC 27815 / 27 / NCTC 11736).